The sequence spans 217 residues: Urease accessory protein UreF (217 aa).

It belongs to the UreF family. UreD, UreF and UreG form a complex that acts as a GTP-hydrolysis-dependent molecular chaperone, activating the urease apoprotein by helping to assemble the nickel containing metallocenter of UreC. The UreE protein probably delivers the nickel.

The protein resides in the cytoplasm. Functionally, required for maturation of urease via the functional incorporation of the urease nickel metallocenter. This Ruegeria pomeroyi (strain ATCC 700808 / DSM 15171 / DSS-3) (Silicibacter pomeroyi) protein is Urease accessory protein UreF.